The following is a 223-amino-acid chain: Urease accessory protein UreF (223 aa).

This sequence belongs to the UreF family. As to quaternary structure, ureD, UreF and UreG form a complex that acts as a GTP-hydrolysis-dependent molecular chaperone, activating the urease apoprotein by helping to assemble the nickel containing metallocenter of UreC. The UreE protein probably delivers the nickel.

The protein localises to the cytoplasm. Functionally, required for maturation of urease via the functional incorporation of the urease nickel metallocenter. This is Urease accessory protein UreF from Pseudomonas aeruginosa (strain LESB58).